The primary structure comprises 719 residues: Nucleolar complex protein 2 homolog (719 aa).

The span at 1–24 (MKLLKKSSSLKKGVTKRAKLQKKP) shows a compositional bias: basic residues. Disordered regions lie at residues 1–67 (MKLL…GMKK), 86–136 (LQQE…TKIK), and 643–719 (ALEN…SDED). Residues 25–42 (PSKDEASSSDEELAKLDG) show a composition bias toward basic and acidic residues. Over residues 89-130 (EDADLLNMEEDEDDDEEGEDNEDEEDEEEEEESDEDDDEEDD) the composition is skewed to acidic residues. The span at 643-661 (ALENSKKDDKKKKKEEEAA) shows a compositional bias: basic and acidic residues.

The protein belongs to the NOC2 family.

The protein localises to the nucleus. Its function is as follows. Required for normal somatic gonad development and for regulation of germline development and proliferation. The polypeptide is Nucleolar complex protein 2 homolog (pro-2) (Caenorhabditis briggsae).